The sequence spans 263 residues: 3-deoxy-manno-octulosonate cytidylyltransferase 1 (263 aa).

The protein belongs to the KdsB family.

Its subcellular location is the cytoplasm. It catalyses the reaction 3-deoxy-alpha-D-manno-oct-2-ulosonate + CTP = CMP-3-deoxy-beta-D-manno-octulosonate + diphosphate. The protein operates within nucleotide-sugar biosynthesis; CMP-3-deoxy-D-manno-octulosonate biosynthesis; CMP-3-deoxy-D-manno-octulosonate from 3-deoxy-D-manno-octulosonate and CTP: step 1/1. It participates in bacterial outer membrane biogenesis; lipopolysaccharide biosynthesis. Functionally, activates KDO (a required 8-carbon sugar) for incorporation into bacterial lipopolysaccharide in Gram-negative bacteria. The sequence is that of 3-deoxy-manno-octulosonate cytidylyltransferase 1 from Burkholderia ambifaria (strain ATCC BAA-244 / DSM 16087 / CCUG 44356 / LMG 19182 / AMMD) (Burkholderia cepacia (strain AMMD)).